The chain runs to 1217 residues: DNA-directed RNA polymerase subunit beta' (1217 aa).

4 residues coordinate Zn(2+): C60, C62, C75, and C78. Mg(2+) is bound by residues D449, D451, and D453. Positions 818, 892, 899, and 902 each coordinate Zn(2+).

It belongs to the RNA polymerase beta' chain family. The RNAP catalytic core consists of 2 alpha, 1 beta, 1 beta' and 1 omega subunit. When a sigma factor is associated with the core the holoenzyme is formed, which can initiate transcription. Mg(2+) is required as a cofactor. Requires Zn(2+) as cofactor.

The enzyme catalyses RNA(n) + a ribonucleoside 5'-triphosphate = RNA(n+1) + diphosphate. In terms of biological role, DNA-dependent RNA polymerase catalyzes the transcription of DNA into RNA using the four ribonucleoside triphosphates as substrates. This is DNA-directed RNA polymerase subunit beta' from Enterococcus faecalis (strain ATCC 700802 / V583).